The chain runs to 473 residues: Probable glycine dehydrogenase (decarboxylating) subunit 2 (473 aa).

Position 266 is an N6-(pyridoxal phosphate)lysine (Lys266).

Belongs to the GcvP family. C-terminal subunit subfamily. The glycine cleavage system is composed of four proteins: P, T, L and H. In this organism, the P 'protein' is a heterodimer of two subunits. Pyridoxal 5'-phosphate serves as cofactor.

It catalyses the reaction N(6)-[(R)-lipoyl]-L-lysyl-[glycine-cleavage complex H protein] + glycine + H(+) = N(6)-[(R)-S(8)-aminomethyldihydrolipoyl]-L-lysyl-[glycine-cleavage complex H protein] + CO2. In terms of biological role, the glycine cleavage system catalyzes the degradation of glycine. The P protein binds the alpha-amino group of glycine through its pyridoxal phosphate cofactor; CO(2) is released and the remaining methylamine moiety is then transferred to the lipoamide cofactor of the H protein. The sequence is that of Probable glycine dehydrogenase (decarboxylating) subunit 2 from Thermus thermophilus (strain ATCC BAA-163 / DSM 7039 / HB27).